The chain runs to 170 residues: Crossover junction endodeoxyribonuclease RuvC (170 aa).

Active-site residues include Asp11, Glu71, and Asp143. Mg(2+)-binding residues include Asp11, Glu71, and Asp143.

This sequence belongs to the RuvC family. Homodimer which binds Holliday junction (HJ) DNA. The HJ becomes 2-fold symmetrical on binding to RuvC with unstacked arms; it has a different conformation from HJ DNA in complex with RuvA. In the full resolvosome a probable DNA-RuvA(4)-RuvB(12)-RuvC(2) complex forms which resolves the HJ. Mg(2+) is required as a cofactor.

It localises to the cytoplasm. The catalysed reaction is Endonucleolytic cleavage at a junction such as a reciprocal single-stranded crossover between two homologous DNA duplexes (Holliday junction).. In terms of biological role, the RuvA-RuvB-RuvC complex processes Holliday junction (HJ) DNA during genetic recombination and DNA repair. Endonuclease that resolves HJ intermediates. Cleaves cruciform DNA by making single-stranded nicks across the HJ at symmetrical positions within the homologous arms, yielding a 5'-phosphate and a 3'-hydroxyl group; requires a central core of homology in the junction. The consensus cleavage sequence is 5'-(A/T)TT(C/G)-3'. Cleavage occurs on the 3'-side of the TT dinucleotide at the point of strand exchange. HJ branch migration catalyzed by RuvA-RuvB allows RuvC to scan DNA until it finds its consensus sequence, where it cleaves and resolves the cruciform DNA. In Rhizobium meliloti (strain 1021) (Ensifer meliloti), this protein is Crossover junction endodeoxyribonuclease RuvC.